Here is an 858-residue protein sequence, read N- to C-terminus: Putative glutamate--cysteine ligase 2-3 (858 aa).

The interval Met1–Leu372 is carboxylate-amine ligase. The interval Gly373–Arg858 is unknown.

In the N-terminal section; belongs to the glutamate--cysteine ligase type 2 family. YbdK subfamily.

It carries out the reaction L-cysteine + L-glutamate + ATP = gamma-L-glutamyl-L-cysteine + ADP + phosphate + H(+). Its function is as follows. ATP-dependent carboxylate-amine ligase which exhibits weak glutamate--cysteine ligase activity. This is Putative glutamate--cysteine ligase 2-3 from Frankia alni (strain DSM 45986 / CECT 9034 / ACN14a).